The sequence spans 289 residues: Protein charybde (289 aa).

The segment at 119–142 (TAHHPGHGHGPGPSPMPASPLQST) is disordered.

Belongs to the DDIT4 family.

The protein localises to the cytoplasm. Its function is as follows. Inhibits cell growth by regulating the Tor pathway upstream of the Tsc1-Tsc2 complex and downstream of Akt1. Acts as a cell death activator during head development. The polypeptide is Protein charybde (chrb) (Drosophila pseudoobscura pseudoobscura (Fruit fly)).